Here is a 91-residue protein sequence, read N- to C-terminus: Small ribosomal subunit protein bS18 (91 aa).

The protein belongs to the bacterial ribosomal protein bS18 family. Part of the 30S ribosomal subunit. Forms a tight heterodimer with protein bS6.

Its function is as follows. Binds as a heterodimer with protein bS6 to the central domain of the 16S rRNA, where it helps stabilize the platform of the 30S subunit. The sequence is that of Small ribosomal subunit protein bS18 from Burkholderia multivorans (strain ATCC 17616 / 249).